Here is a 118-residue protein sequence, read N- to C-terminus: Large ribosomal subunit protein bL20 (118 aa).

The protein belongs to the bacterial ribosomal protein bL20 family.

In terms of biological role, binds directly to 23S ribosomal RNA and is necessary for the in vitro assembly process of the 50S ribosomal subunit. It is not involved in the protein synthesizing functions of that subunit. This Azotobacter vinelandii protein is Large ribosomal subunit protein bL20.